The following is a 206-amino-acid chain: Urease accessory protein UreG (206 aa).

14-21 (GPVGSGKT) provides a ligand contact to GTP.

It belongs to the SIMIBI class G3E GTPase family. UreG subfamily. As to quaternary structure, homodimer. UreD, UreF and UreG form a complex that acts as a GTP-hydrolysis-dependent molecular chaperone, activating the urease apoprotein by helping to assemble the nickel containing metallocenter of UreC. The UreE protein probably delivers the nickel.

It localises to the cytoplasm. In terms of biological role, facilitates the functional incorporation of the urease nickel metallocenter. This process requires GTP hydrolysis, probably effectuated by UreG. This Methylocella silvestris (strain DSM 15510 / CIP 108128 / LMG 27833 / NCIMB 13906 / BL2) protein is Urease accessory protein UreG.